We begin with the raw amino-acid sequence, 289 residues long: Nucleotide-binding protein FRAAL4592 (289 aa).

13 to 20 lines the ATP pocket; that stretch reads GLSGAGRS. Position 64-67 (64-67) interacts with GTP; it reads DVRG.

This sequence belongs to the RapZ-like family.

In terms of biological role, displays ATPase and GTPase activities. In Frankia alni (strain DSM 45986 / CECT 9034 / ACN14a), this protein is Nucleotide-binding protein FRAAL4592.